The following is a 200-amino-acid chain: Recombination protein RecR (200 aa).

Residues 58 to 73 (CQVCGNMDTENICGIC) form a C4-type zinc finger. Positions 81 to 176 (SVIAIVETVA…KISRLASGIP (96 aa)) constitute a Toprim domain.

Belongs to the RecR family.

In terms of biological role, may play a role in DNA repair. It seems to be involved in an RecBC-independent recombinational process of DNA repair. It may act with RecF and RecO. The chain is Recombination protein RecR from Rickettsia bellii (strain OSU 85-389).